Reading from the N-terminus, the 114-residue chain is Kininogen-2 (114 aa).

The first 23 residues, 1–23 (MRLWFCLSFFIVLCLEHFPGTLA), serve as a signal peptide directing secretion. The segment covering 35 to 45 (TRLHGHHKPSR) has biased composition (basic residues). The interval 35–114 (TRLHGHHKPS…QIPGLGPLRG (80 aa)) is disordered. Over residues 65 to 80 (PESEEKTEQFLRDLPK) the composition is skewed to basic and acidic residues. At arginine 113 the chain carries Arginine amide.

Belongs to the bradykinin-related peptide family. Expressed by the skin glands.

The protein resides in the secreted. In terms of biological role, potent vasodilator. Binds B1 (BDKRB1) and B2 (BDKRB2) bradykinin receptors. This Bombina maxima (Giant fire-bellied toad) protein is Kininogen-2.